The chain runs to 162 residues: MVSTRKEGASAGEPVTGARVLIVEGRYYEALADELLAGARAALEAAGATVDVITVPGALEIPIAAEIALEAAEEEDEPYEAVVALGCVIRGETYHFEIVAGESSRGLMDLALAHALPLGNGILTVETEAQAWERARVGEGNKGGGAAEAALSLVRLKRRGLK.

5-amino-6-(D-ribitylamino)uracil contacts are provided by residues Y27, 58–60 (ALE), and 87–89 (CVI). 92 to 93 (ET) provides a ligand contact to (2S)-2-hydroxy-3-oxobutyl phosphate. The Proton donor role is filled by H95. N120 provides a ligand contact to 5-amino-6-(D-ribitylamino)uracil. Position 134 (R134) interacts with (2S)-2-hydroxy-3-oxobutyl phosphate.

This sequence belongs to the DMRL synthase family.

The catalysed reaction is (2S)-2-hydroxy-3-oxobutyl phosphate + 5-amino-6-(D-ribitylamino)uracil = 6,7-dimethyl-8-(1-D-ribityl)lumazine + phosphate + 2 H2O + H(+). It functions in the pathway cofactor biosynthesis; riboflavin biosynthesis; riboflavin from 2-hydroxy-3-oxobutyl phosphate and 5-amino-6-(D-ribitylamino)uracil: step 1/2. In terms of biological role, catalyzes the formation of 6,7-dimethyl-8-ribityllumazine by condensation of 5-amino-6-(D-ribitylamino)uracil with 3,4-dihydroxy-2-butanone 4-phosphate. This is the penultimate step in the biosynthesis of riboflavin. This chain is 6,7-dimethyl-8-ribityllumazine synthase, found in Azorhizobium caulinodans (strain ATCC 43989 / DSM 5975 / JCM 20966 / LMG 6465 / NBRC 14845 / NCIMB 13405 / ORS 571).